The chain runs to 674 residues: Methionine--tRNA ligase (674 aa).

A 'HIGH' region motif is present at residues 11–21; it reads PYANGDLHLGH. Zn(2+)-binding residues include Cys-142, Cys-145, Cys-155, and Cys-158. Residues 330-334 carry the 'KMSKS' region motif; sequence KMSKS. Lys-333 is an ATP binding site. The 101-residue stretch at 574–674 folds into the tRNA-binding domain; it reads DFMKVDLRIA…EGAQPGMRVK (101 aa).

This sequence belongs to the class-I aminoacyl-tRNA synthetase family. MetG type 1 subfamily. As to quaternary structure, homodimer. The cofactor is Zn(2+).

Its subcellular location is the cytoplasm. It catalyses the reaction tRNA(Met) + L-methionine + ATP = L-methionyl-tRNA(Met) + AMP + diphosphate. Its function is as follows. Is required not only for elongation of protein synthesis but also for the initiation of all mRNA translation through initiator tRNA(fMet) aminoacylation. This is Methionine--tRNA ligase from Francisella tularensis subsp. tularensis (strain WY96-3418).